We begin with the raw amino-acid sequence, 1137 residues long: Protein sel-1 homolog 3 (1137 aa).

The disordered stretch occupies residues 1–42; sequence MQWRGAGLWWPRRRQQQQQQQPPPPAFGPPAAAMVPPSRGVS. 2 N-linked (GlcNAc...) asparagine glycosylation sites follow: asparagine 206 and asparagine 387. Sel1-like repeat units lie at residues 575–609, 611–647, 694–730, 732–767, 768–800, 801–839, and 840–877; these read HKAS…GQGS, RLSS…TKTP, AAAQ…LETE, PALI…SKGL, HQAV…EMGN, PDAS…QGGH, and IEGT…EKNG. Serine 613 carries the post-translational modification Phosphoserine. N-linked (GlcNAc...) asparagine glycosylation occurs at asparagine 942. The Sel1-like 8 repeat unit spans residues 952 to 988; that stretch reads SFAYLKMGDLYYYGHQNQSQDLELSVQMYAQAALDGD. Residues 1067–1087 form a helical membrane-spanning segment; sequence LIYFLGTFLLSVVIAWMVLYL. Residues 1100 to 1137 form a disordered region; it reads AWVSADPTSSTPSPAVPPAADASDHDPPMMANGPEPRG. The segment covering 1102–1120 has biased composition (low complexity); that stretch reads VSADPTSSTPSPAVPPAAD.

Its subcellular location is the membrane. The chain is Protein sel-1 homolog 3 (Sel1l3) from Mus musculus (Mouse).